The primary structure comprises 285 residues: 4-hydroxybenzoate octaprenyltransferase (285 aa).

Transmembrane regions (helical) follow at residues Phe-33–Val-53, Leu-93–Leu-113, Ile-134–Tyr-154, Trp-166–Val-186, Leu-209–Leu-229, Ser-233–Ile-253, and Phe-265–Ile-285.

Belongs to the UbiA prenyltransferase family. It depends on Mg(2+) as a cofactor.

It localises to the cell inner membrane. It carries out the reaction all-trans-octaprenyl diphosphate + 4-hydroxybenzoate = 4-hydroxy-3-(all-trans-octaprenyl)benzoate + diphosphate. The protein operates within cofactor biosynthesis; ubiquinone biosynthesis. Functionally, catalyzes the prenylation of para-hydroxybenzoate (PHB) with an all-trans polyprenyl group. Mediates the second step in the final reaction sequence of ubiquinone-8 (UQ-8) biosynthesis, which is the condensation of the polyisoprenoid side chain with PHB, generating the first membrane-bound Q intermediate 3-octaprenyl-4-hydroxybenzoate. This chain is 4-hydroxybenzoate octaprenyltransferase, found in Aliivibrio salmonicida (strain LFI1238) (Vibrio salmonicida (strain LFI1238)).